A 247-amino-acid chain; its full sequence is Protein NipSnap homolog 3B (247 aa).

K45, K48, K57, and K166 each carry N6-succinyllysine.

This sequence belongs to the NipSnap family.

The protein localises to the cytoplasm. Its subcellular location is the cytosol. In Mus musculus (Mouse), this protein is Protein NipSnap homolog 3B (Nipsnap3b).